Consider the following 573-residue polypeptide: Phosphoenolpyruvate-protein phosphotransferase (573 aa).

His190 acts as the Tele-phosphohistidine intermediate in catalysis. Phosphoenolpyruvate is bound by residues Arg297 and Arg332. Mg(2+)-binding residues include Glu431 and Asp455. Residues 454-455 (ND) and Arg465 each bind phosphoenolpyruvate. Cys502 (proton donor) is an active-site residue.

This sequence belongs to the PEP-utilizing enzyme family. As to quaternary structure, homodimer. Mg(2+) serves as cofactor.

It localises to the cytoplasm. The enzyme catalyses L-histidyl-[protein] + phosphoenolpyruvate = N(pros)-phospho-L-histidyl-[protein] + pyruvate. Its activity is regulated as follows. Irreversibly inhibited the sulfhydryl reagent N-ethylmaleimide (NEM). Functionally, general (non sugar-specific) component of the phosphoenolpyruvate-dependent sugar phosphotransferase system (sugar PTS). This major carbohydrate active-transport system catalyzes the phosphorylation of incoming sugar substrates concomitantly with their translocation across the cell membrane. Enzyme I transfers the phosphoryl group from phosphoenolpyruvate (PEP) to the phosphoryl carrier protein (HPr). The chain is Phosphoenolpyruvate-protein phosphotransferase (ptsI) from Mycoplasma capricolum subsp. capricolum (strain California kid / ATCC 27343 / NCTC 10154).